Consider the following 174-residue polypeptide: Alpha-crystallin B chain (174 aa).

Position 1 is an N-acetylmethionine (Met-1). The 109-residue stretch at Arg-55 to Glu-163 folds into the sHSP domain. Positions 82, 103, 105, and 110 each coordinate Zn(2+). The disordered stretch occupies residues Arg-148–Lys-174. The segment covering Lys-149–Pro-166 has biased composition (basic and acidic residues).

Belongs to the small heat shock protein (HSP20) family. As to quaternary structure, heteromer composed of three CRYAA and one CRYAB subunits. Aggregates with homologous proteins, including the small heat shock protein HSPB1, to form large heteromeric complexes. Inter-subunit bridging via zinc ions enhances stability, which is crucial as there is no protein turn over in the lens. As to expression, lens as well as other tissues.

Functionally, may contribute to the transparency and refractive index of the lens. In Anas platyrhynchos (Mallard), this protein is Alpha-crystallin B chain (CRYAB).